We begin with the raw amino-acid sequence, 201 residues long: Small ribosomal subunit protein uS4c (201 aa).

The segment at 17–36 (ALPGLTRKTPKSGSNLKKKF) is disordered. The region spanning 89–157 (MRLDNILFRL…VQNYIASSDP (69 aa)) is the S4 RNA-binding domain.

This sequence belongs to the universal ribosomal protein uS4 family. Part of the 30S ribosomal subunit. Contacts protein S5. The interaction surface between S4 and S5 is involved in control of translational fidelity.

It localises to the plastid. The protein resides in the chloroplast. Its function is as follows. One of the primary rRNA binding proteins, it binds directly to 16S rRNA where it nucleates assembly of the body of the 30S subunit. Functionally, with S5 and S12 plays an important role in translational accuracy. In Agrostis stolonifera (Creeping bentgrass), this protein is Small ribosomal subunit protein uS4c (rps4).